Here is a 443-residue protein sequence, read N- to C-terminus: Threonine/serine transporter TdcC (443 aa).

A run of 11 helical transmembrane segments spans residues 22–42 (TTWTLGLFGTAIGAGVLFFPI), 44–64 (AGFGGLIPILLMLVLAYPIAF), 97–117 (GVVITFLYFFAICPLLWIYGV), 140–160 (FVALFLLLLMAFVIWFGKDLM), 163–183 (VMSYLVWPFIASLVLISLSLI), 207–227 (ILITVWLGISIMVFSFNFSPI), 261–281 (MLMVAVVMFFAFSCLFTLSPA), 311–331 (FAITLEYAASIIALVAIFKSF), 366–386 (ISMIFIMGSTWVVAYANPNIL), 389–409 (IEAMGAPIIASLLCLLPMYAI), and 423–443 (DNVFVTVIGLLTILNIVYKLF).

The protein belongs to the amino acid/polyamine transporter 2 family. SdaC/TdcC subfamily.

The protein localises to the cell inner membrane. It catalyses the reaction L-threonine(in) + H(+)(in) = L-threonine(out) + H(+)(out). It carries out the reaction L-serine(in) + H(+)(in) = L-serine(out) + H(+)(out). Functionally, involved in the import of threonine and serine into the cell, with the concomitant import of a proton (symport system). In Shigella boydii serotype 18 (strain CDC 3083-94 / BS512), this protein is Threonine/serine transporter TdcC.